The following is a 518-amino-acid chain: 2,3-bisphosphoglycerate-independent phosphoglycerate mutase (518 aa).

Positions 14 and 64 each coordinate Mn(2+). Serine 64 serves as the catalytic Phosphoserine intermediate. Residues histidine 125, 155–156 (RD), arginine 187, arginine 193, 264–267 (RPDR), and lysine 337 contribute to the substrate site. Mn(2+) contacts are provided by aspartate 404, histidine 408, aspartate 445, histidine 446, and histidine 467.

The protein belongs to the BPG-independent phosphoglycerate mutase family. The cofactor is Mn(2+).

It carries out the reaction (2R)-2-phosphoglycerate = (2R)-3-phosphoglycerate. It participates in carbohydrate degradation; glycolysis; pyruvate from D-glyceraldehyde 3-phosphate: step 3/5. Catalyzes the interconversion of 2-phosphoglycerate and 3-phosphoglycerate. This is 2,3-bisphosphoglycerate-independent phosphoglycerate mutase from Methanococcoides burtonii (strain DSM 6242 / NBRC 107633 / OCM 468 / ACE-M).